The chain runs to 116 residues: U16-barytoxin-Tl1f (116 aa).

The N-terminal stretch at 1–20 (MKTIIVFLSLLVLATKFGDA) is a signal peptide. Residues 21–74 (NEGVNQEQMKEVIQNEFREDFLNEMAPMSLLQQLEAIESTLLEKEADRNSRQKR) constitute a propeptide that is removed on maturation. 3 disulfides stabilise this stretch: Cys75–Cys90, Cys82–Cys95, and Cys89–Cys110. N-linked (GlcNAc...) asparagine glycosylation is present at Asn85.

Belongs to the neurotoxin 14 (magi-1) family. 06 (ICK-Trit) subfamily. As to expression, expressed by the venom gland.

The protein localises to the secreted. Ion channel inhibitor. This chain is U16-barytoxin-Tl1f, found in Trittame loki (Brush-footed trapdoor spider).